Reading from the N-terminus, the 459-residue chain is Phosphoglucosamine mutase (459 aa).

Serine 112 (phosphoserine intermediate) is an active-site residue. The Mg(2+) site is built by serine 112, aspartate 249, aspartate 251, and aspartate 253. Position 112 is a phosphoserine (serine 112).

This sequence belongs to the phosphohexose mutase family. Requires Mg(2+) as cofactor. Activated by phosphorylation.

The catalysed reaction is alpha-D-glucosamine 1-phosphate = D-glucosamine 6-phosphate. In terms of biological role, catalyzes the conversion of glucosamine-6-phosphate to glucosamine-1-phosphate. This Synechococcus sp. (strain RCC307) protein is Phosphoglucosamine mutase.